We begin with the raw amino-acid sequence, 221 residues long: Max dimerization protein 1 (221 aa).

Residues 21 to 49 (RREREAEHGYASMLPYNNKDRDALKRRNK) carry the Nuclear localization signal motif. 2 disordered regions span residues 30–68 (YASM…EKNR) and 173–204 (TGDL…YSST). In terms of domain architecture, bHLH spans 56 to 108 (SSRSTHNEMEKNRRAHLRLCLEKLKGLVPLGPESSRHTTLSLLTKAKLHIKKL). The span at 175 to 184 (DLDWSSSSVS) shows a compositional bias: low complexity. The span at 191-204 (SMQSLGSDEGYSST) shows a compositional bias: polar residues.

Heterodimer with MAX; the interaction is required for DNA-binding. DNA binding requires dimerization with another bHLH protein; does not form homodimers, and does not bind to DNA in the absence of MAX in vitro. Interacts with RNF17. In terms of processing, ubiquitinated by BIRC2/c-IAP1, leading to its subsequent degradation by the proteasome.

The protein localises to the nucleus. Functionally, component of a transcriptional repressor complex together with MAX. In complex with MAX binds to the core DNA sequence 5'-CAC[GA]TG-3'. Antagonizes MYC transcriptional activity by competing with MYC for MAX binding. Binds to the TERT promoter and represses telomerase expression, possibly by interfering with MYC binding. This chain is Max dimerization protein 1 (MXD1), found in Homo sapiens (Human).